The following is a 98-amino-acid chain: C-X-C motif chemokine 10 (98 aa).

Residues 1 to 21 (MNPSAAVVLCLVLLSLSGTQG) form the signal peptide. Arginine 26 bears the Citrulline mark. 2 cysteine pairs are disulfide-bonded: cysteine 30/cysteine 57 and cysteine 32/cysteine 74.

The protein belongs to the intercrine alpha (chemokine CxC) family. In terms of assembly, monomer, dimer, and tetramer. Interacts with CXCR3 (via N-terminus). In the central nervous system, CXCL10 is predominantly localized to activated neurons. Expressed in both microglia and astrocytes.

It is found in the secreted. Functionally, pro-inflammatory cytokine that is involved in a wide variety of processes such as chemotaxis, differentiation, and activation of peripheral immune cells, regulation of cell growth, apoptosis and modulation of angiostatic effects. Plays thereby an important role during viral infections by stimulating the activation and migration of immune cells to the infected sites. Mechanistically, binding of CXCL10 to the CXCR3 receptor activates G protein-mediated signaling and results in downstream activation of phospholipase C-dependent pathway, an increase in intracellular calcium production and actin reorganization. In turn, recruitment of activated Th1 lymphocytes occurs at sites of inflammation. Activation of the CXCL10/CXCR3 axis also plays an important role in neurons in response to brain injury for activating microglia, the resident macrophage population of the central nervous system, and directing them to the lesion site. This recruitment is an essential element for neuronal reorganization. The chain is C-X-C motif chemokine 10 (Cxcl10) from Rattus norvegicus (Rat).